Consider the following 211-residue polypeptide: Imidazole glycerol phosphate synthase subunit HisH (211 aa).

Positions 1–211 (MIGIIDYGMG…VGIATGRGNG (211 aa)) constitute a Glutamine amidotransferase type-1 domain. The Nucleophile role is filled by cysteine 79. Active-site residues include histidine 186 and glutamate 188.

Heterodimer of HisH and HisF.

The protein resides in the cytoplasm. It carries out the reaction 5-[(5-phospho-1-deoxy-D-ribulos-1-ylimino)methylamino]-1-(5-phospho-beta-D-ribosyl)imidazole-4-carboxamide + L-glutamine = D-erythro-1-(imidazol-4-yl)glycerol 3-phosphate + 5-amino-1-(5-phospho-beta-D-ribosyl)imidazole-4-carboxamide + L-glutamate + H(+). It catalyses the reaction L-glutamine + H2O = L-glutamate + NH4(+). Its pathway is amino-acid biosynthesis; L-histidine biosynthesis; L-histidine from 5-phospho-alpha-D-ribose 1-diphosphate: step 5/9. In terms of biological role, IGPS catalyzes the conversion of PRFAR and glutamine to IGP, AICAR and glutamate. The HisH subunit catalyzes the hydrolysis of glutamine to glutamate and ammonia as part of the synthesis of IGP and AICAR. The resulting ammonia molecule is channeled to the active site of HisF. This chain is Imidazole glycerol phosphate synthase subunit HisH, found in Geobacillus kaustophilus (strain HTA426).